Consider the following 475-residue polypeptide: Ornithine aminotransferase, mitochondrial (475 aa).

The N-terminal 16 residues, 1–16 (MAATTRRLLYYVSKRF), are a transit peptide targeting the mitochondrion. The tract at residues 23–43 (RSYGGLPQSNSKSPPSSSQRL) is disordered. Positions 29–41 (PQSNSKSPPSSSQ) are enriched in low complexity. Residues 142–143 (GA) and phenylalanine 177 each bind pyridoxal 5'-phosphate. Arginine 180 serves as a coordination point for L-ornithine. Residue 265–268 (DEVQ) participates in pyridoxal 5'-phosphate binding. Lysine 294 is subject to N6-(pyridoxal phosphate)lysine. An L-ornithine-binding site is contributed by serine 323. Threonine 324 contacts pyridoxal 5'-phosphate.

It belongs to the class-III pyridoxal-phosphate-dependent aminotransferase family. As to quaternary structure, homotetramer. The cofactor is pyridoxal 5'-phosphate.

The protein resides in the mitochondrion matrix. The enzyme catalyses a 2-oxocarboxylate + L-ornithine = L-glutamate 5-semialdehyde + an L-alpha-amino acid. It functions in the pathway amino-acid biosynthesis; L-proline biosynthesis; L-glutamate 5-semialdehyde from L-ornithine: step 1/1. Its function is as follows. Mediates degradation of arginine for nitrogen recycling. Plays a role in non-host disease resistance by regulating pyrroline-5-carboxylate metabolism-induced hypersensitive response. This chain is Ornithine aminotransferase, mitochondrial, found in Arabidopsis thaliana (Mouse-ear cress).